Here is a 502-residue protein sequence, read N- to C-terminus: Thermosome subunit beta (502 aa).

This sequence belongs to the TCP-1 chaperonin family. In terms of assembly, forms a Heterooligomeric complex of two stacked eight-membered rings.

Molecular chaperone; binds unfolded polypeptides in vitro, and has a weak ATPase activity. This chain is Thermosome subunit beta (thsB), found in Desulfurococcus mucosus (Desulfurococcus mobilis).